The chain runs to 351 residues: 5-deoxyribose 1-phosphate isomerase (351 aa).

Residues 48 to 50 (RGA), arginine 91, and glutamine 198 each bind substrate. The active-site Proton donor is aspartate 239. 249-250 (NK) contacts substrate.

It belongs to the EIF-2B alpha/beta/delta subunits family. DrdI subfamily.

The enzyme catalyses 5-deoxy-alpha-D-ribose 1-phosphate = 5-deoxy-D-ribulose 1-phosphate. The protein operates within carbohydrate degradation. Functionally, catalyzes the isomerization of 5-deoxy-alpha-D-ribose 1-phosphate to 5-deoxy-D-ribulose 1-phosphate, as part of a 5-deoxyribose salvage pathway that recycles this toxic radical SAM enzyme by-product to mainstream metabolites. The sequence is that of 5-deoxyribose 1-phosphate isomerase from Moorella thermoacetica (strain ATCC 39073 / JCM 9320).